The primary structure comprises 263 residues: Norsolorinic acid ketoreductase stcE (263 aa).

7 residues coordinate NADP(+): Leu-29, Asp-76, Asn-105, Tyr-177, Lys-181, Ile-208, and Ser-210. The active-site Proton donor is the Tyr-177. Lys-181 acts as the Lowers pKa of active site Tyr in catalysis.

The protein belongs to the short-chain dehydrogenases/reductases (SDR) family.

It carries out the reaction (1'S)-averantin + NADP(+) = norsolorinic acid + NADPH + H(+). It functions in the pathway mycotoxin biosynthesis; sterigmatocystin biosynthesis. Its function is as follows. Short chain dehydrogenase; part of the gene cluster that mediates the biosynthesis of sterigmatocystin (ST), a polyketide-derived furanocoumarin which is part of the most toxic and carcinogenic compounds among the known mycotoxins. The first step in the biosynthesis of sterigmatocystin is the production of hexanoate by the fatty acid synthase (FAS) units stcJ and stcK. The polyketide backbone is assembled by the non-reducing polyketide synthase stcA by condensation of the starter hexanoyl-CoA and 7 malonyl-CoA extender units followed by cyclization and release of norsolorinic acid. Norsolorinic acid is the first stable intermediate in the biosynthesis of sterigmatocystin and is converted into averantin (AVN) by the ketoreductase stcE which reduces the hexanoate ketone to an alcohol. Averantin is then oxidized into 5'-hydroxyaverantin (HAVN) by the cytochrome P450 monooxygenase stcF. 5'-hydroxyaverantin is further converted to 5'-oxyaverantin (OAVN) by the 5'-hydroxyaverantin dehydrogenase stcG. The next step is the conversion of OAVN into averufin (AVF) which is catalyzed by a yet to be identified enzyme. The cytochrome P450 monooxygenase stcB and the flavin-binding monooxygenase stcW are both required for the conversion of averufin to 1-hydroxyversicolorone. The esterase stcI probably catalyzes the formation of versiconal hemiacetal acetate from 1-hydroxyversicolorone. The oxydoreductase stcN then probably catalyzes the biosynthetic step from versiconal to versicolorin B (VERB). The next step is performed by the versicolorin B desaturase stcL to produce versicolorin A (VERA). The ketoreductase stcU and the cytochrome P450 monooxygenase stcS are involved in the conversion of versicolorin A to demethylsterigmatocystin. The Baeyer-Villiger oxidas stcQ and the reductase stcR might be involved in the biosynthetic step from versicolorin A to demethylsterigmatocystin. The final step in the biosynthesis of sterigmatocystin is the methylation of demethylsterigmatocystin catalyzed by the methyltransferase stcP. The chain is Norsolorinic acid ketoreductase stcE from Emericella nidulans (strain FGSC A4 / ATCC 38163 / CBS 112.46 / NRRL 194 / M139) (Aspergillus nidulans).